The chain runs to 158 residues: Dysbindin domain-containing protein 1 (158 aa).

Disordered stretches follow at residues 1–50 and 93–158; these read MEPP…VPAP and ADSD…PQED. 2 positions are modified to phosphoserine: Ser95 and Ser119. Residues 125–141 show a composition bias toward basic and acidic residues; the sequence is TRAEQSHEKQPLGDPER.

This sequence belongs to the dysbindin family.

This is Dysbindin domain-containing protein 1 (DBNDD1) from Homo sapiens (Human).